Consider the following 420-residue polypeptide: Gamma-glutamyl phosphate reductase (420 aa).

Belongs to the gamma-glutamyl phosphate reductase family.

The protein resides in the cytoplasm. The catalysed reaction is L-glutamate 5-semialdehyde + phosphate + NADP(+) = L-glutamyl 5-phosphate + NADPH + H(+). Its pathway is amino-acid biosynthesis; L-proline biosynthesis; L-glutamate 5-semialdehyde from L-glutamate: step 2/2. Its function is as follows. Catalyzes the NADPH-dependent reduction of L-glutamate 5-phosphate into L-glutamate 5-semialdehyde and phosphate. The product spontaneously undergoes cyclization to form 1-pyrroline-5-carboxylate. This is Gamma-glutamyl phosphate reductase from Neisseria meningitidis serogroup C / serotype 2a (strain ATCC 700532 / DSM 15464 / FAM18).